A 717-amino-acid chain; its full sequence is Patatin-like phospholipase domain-containing protein PGUG_03164 (717 aa).

Residues 123–143 (WPFLIIITVWILLLCILYTVV) form a helical membrane-spanning segment. A PNPLA domain is found at 298-490 (LCLSGGACFA…RTDIPIDALK (193 aa)). The GXSXG signature appears at 329–333 (GTSGG). The active-site Nucleophile is serine 331. Aspartate 477 functions as the Proton acceptor in the catalytic mechanism. The disordered stretch occupies residues 680–717 (YDSESSAEETLSPGFSQGTHAVLTDESDDDSSDDEIDD). The segment covering 704–717 (DESDDDSSDDEIDD) has biased composition (acidic residues).

Belongs to the PLPL family.

The protein localises to the membrane. Its function is as follows. Probable lipid hydrolase. The chain is Patatin-like phospholipase domain-containing protein PGUG_03164 from Meyerozyma guilliermondii (strain ATCC 6260 / CBS 566 / DSM 6381 / JCM 1539 / NBRC 10279 / NRRL Y-324) (Yeast).